Here is a 101-residue protein sequence, read N- to C-terminus: Ubiquitin-like protein SMT3 (101 aa).

Position 2 is an N-acetylserine (Ser2). Ser2 and Ser4 each carry phosphoserine. Positions 22-98 constitute a Ubiquitin-like domain; sequence THINLKVSDG…IEAHREQIGG (77 aa). Residue Gly98 forms a Glycyl lysine isopeptide (Gly-Lys) (interchain with K-? in acceptor proteins) linkage. Residues 99–101 constitute a propeptide that is removed on maturation; that stretch reads ATY.

This sequence belongs to the ubiquitin family. SUMO subfamily. In terms of assembly, activated by a E1 ligase composed of AOS1 and UBA2.

Its function is as follows. Not known; suppressor of MIF2 mutations. The sequence is that of Ubiquitin-like protein SMT3 (SMT3) from Saccharomyces cerevisiae (strain ATCC 204508 / S288c) (Baker's yeast).